The sequence spans 298 residues: Acetyl-coenzyme A carboxylase carboxyl transferase subunit beta (298 aa).

Residues 1 to 21 form a disordered region; it reads MNQEVKSGKVLSPSTPWTQRP. Positions 41-298 constitute a CoA carboxyltransferase N-terminal domain; that stretch reads PTIECPECHA…RLVSKLMNLP (258 aa). The Zn(2+) site is built by Cys-45, Cys-48, Cys-64, and Cys-67. The C4-type zinc-finger motif lies at 45–67; it reads CPECHALVTRTAISFNAYVCPQC.

Belongs to the AccD/PCCB family. As to quaternary structure, acetyl-CoA carboxylase is a heterohexamer composed of biotin carboxyl carrier protein (AccB), biotin carboxylase (AccC) and two subunits each of ACCase subunit alpha (AccA) and ACCase subunit beta (AccD). The cofactor is Zn(2+).

It is found in the cytoplasm. It carries out the reaction N(6)-carboxybiotinyl-L-lysyl-[protein] + acetyl-CoA = N(6)-biotinyl-L-lysyl-[protein] + malonyl-CoA. It functions in the pathway lipid metabolism; malonyl-CoA biosynthesis; malonyl-CoA from acetyl-CoA: step 1/1. Component of the acetyl coenzyme A carboxylase (ACC) complex. Biotin carboxylase (BC) catalyzes the carboxylation of biotin on its carrier protein (BCCP) and then the CO(2) group is transferred by the transcarboxylase to acetyl-CoA to form malonyl-CoA. The polypeptide is Acetyl-coenzyme A carboxylase carboxyl transferase subunit beta (Acinetobacter baumannii (strain AYE)).